We begin with the raw amino-acid sequence, 280 residues long: Adenosylcobinamide-GDP ribazoletransferase (280 aa).

Transmembrane regions (helical) follow at residues 4–24, 39–59, 61–81, 108–128, 196–216, and 255–275; these read YLLA…GISM, VVGA…QVIF, GPVL…FNHL, TIGT…YGSI, FLIG…WIGL, and TALI…MGGF.

Belongs to the CobS family. Mg(2+) serves as cofactor.

It is found in the cell membrane. The catalysed reaction is alpha-ribazole + adenosylcob(III)inamide-GDP = adenosylcob(III)alamin + GMP + H(+). The enzyme catalyses alpha-ribazole 5'-phosphate + adenosylcob(III)inamide-GDP = adenosylcob(III)alamin 5'-phosphate + GMP + H(+). It participates in cofactor biosynthesis; adenosylcobalamin biosynthesis; adenosylcobalamin from cob(II)yrinate a,c-diamide: step 7/7. Its function is as follows. Joins adenosylcobinamide-GDP and alpha-ribazole to generate adenosylcobalamin (Ado-cobalamin). Also synthesizes adenosylcobalamin 5'-phosphate from adenosylcobinamide-GDP and alpha-ribazole 5'-phosphate. In Methanosarcina barkeri (strain Fusaro / DSM 804), this protein is Adenosylcobinamide-GDP ribazoletransferase.